Consider the following 298-residue polypeptide: ATP phosphoribosyltransferase (298 aa).

Belongs to the ATP phosphoribosyltransferase family. Long subfamily. The cofactor is Mg(2+).

It is found in the cytoplasm. It carries out the reaction 1-(5-phospho-beta-D-ribosyl)-ATP + diphosphate = 5-phospho-alpha-D-ribose 1-diphosphate + ATP. It functions in the pathway amino-acid biosynthesis; L-histidine biosynthesis; L-histidine from 5-phospho-alpha-D-ribose 1-diphosphate: step 1/9. Its activity is regulated as follows. Feedback inhibited by histidine. Functionally, catalyzes the condensation of ATP and 5-phosphoribose 1-diphosphate to form N'-(5'-phosphoribosyl)-ATP (PR-ATP). Has a crucial role in the pathway because the rate of histidine biosynthesis seems to be controlled primarily by regulation of HisG enzymatic activity. This is ATP phosphoribosyltransferase from Vibrio campbellii (strain ATCC BAA-1116).